A 525-amino-acid polypeptide reads, in one-letter code: Nucleolar complex protein 4 homolog (525 aa).

3 helical membrane-spanning segments follow: residues 305-325 (AAYDIGGAISLSALNGLFVPI), 356-376 (FFHLANIFLSSTHLPVYLVAA), and 384-404 (LSLTAPPTALLILLPFICNLI).

It belongs to the CBF/MAK21 family.

It localises to the nucleus membrane. The protein resides in the nucleus. It is found in the nucleolus. This Danio rerio (Zebrafish) protein is Nucleolar complex protein 4 homolog (noc4l).